Reading from the N-terminus, the 453-residue chain is Citrate (Re)-synthase (453 aa).

The Pyruvate carboxyltransferase domain maps to 46–316 (IYITDTTFRD…TKNMKLHVIT (271 aa)).

Belongs to the alpha-IPM synthase/homocitrate synthase family. Requires Mn(2+) as cofactor. Co(2+) is required as a cofactor. The cofactor is Mg(2+).

It carries out the reaction oxaloacetate + acetyl-CoA + H2O = citrate + CoA + H(+). With respect to regulation, inhibited by p-chloromercuribenzoate (pCMB), EDTA, Zn(2+) ions, and under aerobic conditions. Its function is as follows. Catalyzes the condensation of the acetyl group of acetyl-CoA with oxaloacetate to form citrate. This enzyme is highly Re-face stereospecific with respect to the C-2 of oxaloacetate. This Clostridium kluyveri (strain ATCC 8527 / DSM 555 / NBRC 12016 / NCIMB 10680 / K1) protein is Citrate (Re)-synthase.